The primary structure comprises 186 residues: Peptidyl-tRNA hydrolase (186 aa).

Position 14 (Y14) interacts with tRNA. H19 serves as the catalytic Proton acceptor. Positions 64, 66, and 112 each coordinate tRNA.

Belongs to the PTH family. Monomer.

It is found in the cytoplasm. It catalyses the reaction an N-acyl-L-alpha-aminoacyl-tRNA + H2O = an N-acyl-L-amino acid + a tRNA + H(+). Functionally, hydrolyzes ribosome-free peptidyl-tRNAs (with 1 or more amino acids incorporated), which drop off the ribosome during protein synthesis, or as a result of ribosome stalling. Catalyzes the release of premature peptidyl moieties from peptidyl-tRNA molecules trapped in stalled 50S ribosomal subunits, and thus maintains levels of free tRNAs and 50S ribosomes. The protein is Peptidyl-tRNA hydrolase of Mesoplasma florum (strain ATCC 33453 / NBRC 100688 / NCTC 11704 / L1) (Acholeplasma florum).